Consider the following 448-residue polypeptide: Probable cytosolic Fe-S cluster assembly factor Bm6838 (448 aa).

8 residues coordinate [4Fe-4S] cluster: C27, C66, C69, C72, C170, C226, C370, and C374.

This sequence belongs to the NARF family.

Component of the cytosolic iron-sulfur (Fe/S) protein assembly machinery. Required for maturation of extramitochondrial Fe/S proteins. The protein is Probable cytosolic Fe-S cluster assembly factor Bm6838 of Brugia malayi (Filarial nematode worm).